Consider the following 318-residue polypeptide: Olfactory receptor 5M5 (318 aa).

The Extracellular segment spans residues Met-1–Pro-31. Asn-11 carries an N-linked (GlcNAc...) asparagine glycan. The chain crosses the membrane as a helical span at residues Leu-32–Met-52. Residues Val-53–Arg-60 are Cytoplasmic-facing. A helical transmembrane segment spans residues Leu-61–Thr-81. The Extracellular segment spans residues Asn-82–Val-105. Cys-103 and Cys-195 form a disulfide bridge. The helical transmembrane segment at Gln-106–Tyr-126 threads the bilayer. Residues Asp-127–Ser-139 are Cytoplasmic-facing. A helical membrane pass occupies residues Ser-140 to Leu-160. Residues Ser-161–Glu-202 are Extracellular-facing. A helical membrane pass occupies residues Thr-203–Ser-223. The Cytoplasmic portion of the chain corresponds to Tyr-224 to Ala-243. The chain crosses the membrane as a helical span at residues Phe-244–Met-264. Residues Tyr-265–Ser-277 lie on the Extracellular side of the membrane. Residues Lys-278–Leu-298 form a helical membrane-spanning segment. The Cytoplasmic portion of the chain corresponds to Arg-299–Lys-318.

This sequence belongs to the G-protein coupled receptor 1 family.

It localises to the cell membrane. In terms of biological role, potential odorant receptor. The chain is Olfactory receptor 5M5 from Mus musculus (Mouse).